Reading from the N-terminus, the 782-residue chain is Endonuclease MutS2 (782 aa).

336–343 is an ATP binding site; it reads GPNTGGKT. A Smr domain is found at 707-782; sequence LDLRGYRYEE…GFGVTVAELK (76 aa).

This sequence belongs to the DNA mismatch repair MutS family. MutS2 subfamily. Homodimer. Binds to stalled ribosomes, contacting rRNA.

Endonuclease that is involved in the suppression of homologous recombination and thus may have a key role in the control of bacterial genetic diversity. Its function is as follows. Acts as a ribosome collision sensor, splitting the ribosome into its 2 subunits. Detects stalled/collided 70S ribosomes which it binds and splits by an ATP-hydrolysis driven conformational change. Acts upstream of the ribosome quality control system (RQC), a ribosome-associated complex that mediates the extraction of incompletely synthesized nascent chains from stalled ribosomes and their subsequent degradation. Probably generates substrates for RQC. This is Endonuclease MutS2 from Staphylococcus epidermidis (strain ATCC 35984 / DSM 28319 / BCRC 17069 / CCUG 31568 / BM 3577 / RP62A).